The primary structure comprises 217 residues: Outer-membrane lipoprotein LolB (217 aa).

Residues 1–20 (MSRAVRTLALGGLVLVGLSA) form the signal peptide. Cysteine 21 carries the N-palmitoyl cysteine lipid modification. A lipid anchor (S-diacylglycerol cysteine) is attached at cysteine 21.

It belongs to the LolB family. Monomer.

The protein localises to the cell outer membrane. Functionally, plays a critical role in the incorporation of lipoproteins in the outer membrane after they are released by the LolA protein. This chain is Outer-membrane lipoprotein LolB, found in Xanthomonas euvesicatoria pv. vesicatoria (strain 85-10) (Xanthomonas campestris pv. vesicatoria).